We begin with the raw amino-acid sequence, 449 residues long: Glucose-6-phosphate isomerase (449 aa).

Glu-291 acts as the Proton donor in catalysis. Residues His-312 and Lys-426 contribute to the active site.

It belongs to the GPI family.

Its subcellular location is the cytoplasm. It carries out the reaction alpha-D-glucose 6-phosphate = beta-D-fructose 6-phosphate. It participates in carbohydrate biosynthesis; gluconeogenesis. It functions in the pathway carbohydrate degradation; glycolysis; D-glyceraldehyde 3-phosphate and glycerone phosphate from D-glucose: step 2/4. Functionally, catalyzes the reversible isomerization of glucose-6-phosphate to fructose-6-phosphate. This Clostridium botulinum (strain Alaska E43 / Type E3) protein is Glucose-6-phosphate isomerase.